An 89-amino-acid polypeptide reads, in one-letter code: Small ribosomal subunit protein uS15 (89 aa).

This sequence belongs to the universal ribosomal protein uS15 family. Part of the 30S ribosomal subunit. Forms a bridge to the 50S subunit in the 70S ribosome, contacting the 23S rRNA.

Its function is as follows. One of the primary rRNA binding proteins, it binds directly to 16S rRNA where it helps nucleate assembly of the platform of the 30S subunit by binding and bridging several RNA helices of the 16S rRNA. Functionally, forms an intersubunit bridge (bridge B4) with the 23S rRNA of the 50S subunit in the ribosome. This chain is Small ribosomal subunit protein uS15, found in Oceanobacillus iheyensis (strain DSM 14371 / CIP 107618 / JCM 11309 / KCTC 3954 / HTE831).